Consider the following 130-residue polypeptide: Blasticidin-S deaminase (130 aa).

Residues 1–129 form the CMP/dCMP-type deaminase domain; sequence MPLSQEESTL…ELLPSGYVWE (129 aa). Residue serine 28 participates in substrate binding. Cysteine 54 provides a ligand contact to Zn(2+). Residue glutamate 56 is the Proton donor of the active site. Arginine 82 contacts substrate. Zn(2+) is bound by residues cysteine 88 and cysteine 91. Substrate-binding residues include tyrosine 126 and tryptophan 128.

Belongs to the cytidine and deoxycytidylate deaminase family. As to quaternary structure, homotetramer. Zn(2+) serves as cofactor.

It catalyses the reaction blasticidin S + H2O + H(+) = deaminohydroxyblasticidin S + NH4(+). Its function is as follows. Catalyzes the deamination of the cytosine moiety of the antibiotics blasticidin S, cytomycin and acetylblasticidin S. In Aspergillus terreus, this protein is Blasticidin-S deaminase (bsd).